Consider the following 178-residue polypeptide: ATP-dependent protease subunit HslV (178 aa).

Threonine 7 is a catalytic residue. Residues glycine 162, cysteine 165, and threonine 168 each contribute to the Na(+) site.

This sequence belongs to the peptidase T1B family. HslV subfamily. In terms of assembly, a double ring-shaped homohexamer of HslV is capped on each side by a ring-shaped HslU homohexamer. The assembly of the HslU/HslV complex is dependent on binding of ATP.

It is found in the cytoplasm. It catalyses the reaction ATP-dependent cleavage of peptide bonds with broad specificity.. Its activity is regulated as follows. Allosterically activated by HslU binding. Its function is as follows. Protease subunit of a proteasome-like degradation complex believed to be a general protein degrading machinery. This is ATP-dependent protease subunit HslV from Cupriavidus necator (strain ATCC 17699 / DSM 428 / KCTC 22496 / NCIMB 10442 / H16 / Stanier 337) (Ralstonia eutropha).